A 399-amino-acid polypeptide reads, in one-letter code: MAKEKYNRTKPHVNIGTIGHVDHGKTTLTAAISAVLSRKGLAELKDYSNIDNAPEEKERGITIATSHIEYETEKRHYAHVDCPGHADYVKNMITGAAQMDGAILVIASTDGPMAQTREHILLARQVGVPYIVVFLNKTDMVDDPELIELVEEEVKDLLKEYGFPGDEIPIIKGSALKALEEAKAGGDGEWSAKIMELMDAVDSYIPTPKRDTDKDFLMPIEDIFSISGRGTVVTGRVEKGIVKVGDTVELVGIKPTQTTTVTGVEMFRKELDEGEAGDNVGVLLRGTAKEDVERGMVLAKPKSITPHTKFEAEVYILTKEEGGRHTPFFNNYRPQFYVRTTDVTGSIQLPEGTEMVMPGDNVKITVELIHPIALEQGTRFAIREGGHTVGSGVVSKILG.

The tr-type G domain occupies 10-209; the sequence is KPHVNIGTIG…AVDSYIPTPK (200 aa). A G1 region spans residues 19-26; that stretch reads GHVDHGKT. 19 to 26 serves as a coordination point for GTP; it reads GHVDHGKT. Threonine 26 is a binding site for Mg(2+). Positions 60-64 are G2; the sequence is GITIA. Positions 81–84 are G3; sequence DCPG. GTP contacts are provided by residues 81–85 and 136–139; these read DCPGH and NKTD. Residues 136–139 are G4; it reads NKTD. The tract at residues 174–176 is G5; the sequence is SAL.

Belongs to the TRAFAC class translation factor GTPase superfamily. Classic translation factor GTPase family. EF-Tu/EF-1A subfamily. Monomer.

It is found in the cytoplasm. The catalysed reaction is GTP + H2O = GDP + phosphate + H(+). Its function is as follows. GTP hydrolase that promotes the GTP-dependent binding of aminoacyl-tRNA to the A-site of ribosomes during protein biosynthesis. The polypeptide is Elongation factor Tu (Campylobacter hominis (strain ATCC BAA-381 / DSM 21671 / CCUG 45161 / LMG 19568 / NCTC 13146 / CH001A)).